The primary structure comprises 455 residues: Golgi pH regulator (455 aa).

The next 4 helical transmembrane spans lie at 46–66 (ITFA…LGAL), 79–99 (LYVI…YFVV), 111–131 (LFAC…GDPF), and 150–170 (VGVI…VNCP). 2 N-linked (GlcNAc...) asparagine glycosylation sites follow: asparagine 180 and asparagine 243. 4 helical membrane passes run 290–310 (GYFF…NIVF), 343–363 (ISFI…LITL), 378–398 (VIVL…VLLM), and 425–445 (WFDV…YLAH).

The protein belongs to the Golgi pH regulator (TC 1.A.38) family. As to quaternary structure, homotrimer.

Its subcellular location is the golgi apparatus membrane. The catalysed reaction is iodide(out) = iodide(in). It carries out the reaction chloride(in) = chloride(out). It catalyses the reaction bromide(in) = bromide(out). The enzyme catalyses fluoride(in) = fluoride(out). Voltage-gated channel that enables the transfer of anions such as iodide, chloride, bromide and fluoride which may function in counter-ion conductance and participates in Golgi acidification. This chain is Golgi pH regulator, found in Salmo salar (Atlantic salmon).